The primary structure comprises 180 residues: Chromatin structure-remodeling complex protein RSC14 (180 aa).

Interacts with STH1, RSC3 and ARP9. Component of the two forms of the RSC complex composed of at least either RSC1 or RSC2, and ARP7, ARP9, LDB7, NPL6, RSC3, RSC30, RSC4, RSC58, RSC6, RSC8, RSC9, SFH1, STH1, HTL1 and probably RTT102. The complexes interact with histone and histone variant components of centromeric chromatin. Component of a fungal-specific module (HTL1-LDB7-NPL6-RSC3-RSC30) within the RSC complex.

Its subcellular location is the nucleus. Component of the chromatin structure-remodeling complex (RSC), which is involved in transcription regulation and nucleosome positioning. RSC is responsible for the transfer of a histone octamer from a nucleosome core particle to naked DNA. The reaction requires ATP and involves an activated RSC-nucleosome intermediate. Remodeling reaction also involves DNA translocation, DNA twist and conformational change. As a reconfigurer of centromeric and flanking nucleosomes, RSC complex is required both for proper kinetochore function in chromosome segregation and, via a PKC1-dependent signaling pathway, for organization of the cellular cytoskeleton. Together with HTL1, NPL6, RSC3, RSC30 components, defines a fungal-specific module within the RSC complex that plays a role in many cellular functions including the maintenance of cell wall integrity. May be involved in the transfer of mannosylphosphate (MP) groups into N-linked oligosaccharides. The sequence is that of Chromatin structure-remodeling complex protein RSC14 (LDB7) from Saccharomyces cerevisiae (strain ATCC 204508 / S288c) (Baker's yeast).